Reading from the N-terminus, the 85-residue chain is ATP synthase subunit c (85 aa).

The next 2 membrane-spanning stretches (helical) occupy residues 10–30 (IAVA…FAIL) and 53–73 (FIVA…ALFF).

This sequence belongs to the ATPase C chain family. F-type ATPases have 2 components, F(1) - the catalytic core - and F(0) - the membrane proton channel. F(1) has five subunits: alpha(3), beta(3), gamma(1), delta(1), epsilon(1). F(0) has three main subunits: a(1), b(2) and c(10-14). The alpha and beta chains form an alternating ring which encloses part of the gamma chain. F(1) is attached to F(0) by a central stalk formed by the gamma and epsilon chains, while a peripheral stalk is formed by the delta and b chains.

It localises to the cell inner membrane. Functionally, f(1)F(0) ATP synthase produces ATP from ADP in the presence of a proton or sodium gradient. F-type ATPases consist of two structural domains, F(1) containing the extramembraneous catalytic core and F(0) containing the membrane proton channel, linked together by a central stalk and a peripheral stalk. During catalysis, ATP synthesis in the catalytic domain of F(1) is coupled via a rotary mechanism of the central stalk subunits to proton translocation. Key component of the F(0) channel; it plays a direct role in translocation across the membrane. A homomeric c-ring of between 10-14 subunits forms the central stalk rotor element with the F(1) delta and epsilon subunits. This is ATP synthase subunit c from Shewanella halifaxensis (strain HAW-EB4).